A 190-amino-acid chain; its full sequence is MADTSSPSFLQLALARQTVLAGGVIAYPTEAVWGLGCDPWNREAVEYILELKQRPMEKGVILVAASVEQVRFLLDPLPDAVQSEALRHWPGPVTCLLPDVNQQVPEWVRGKHSSIAVRVSDHPVVRALCEATGMPLVSTSCNPAGRQPARAIWQVRRYFGDRIDRIVPGALGGNRKPSRIIDIVTGQQFR.

In terms of domain architecture, YrdC-like spans 9–190; it reads FLQLALARQT…IDIVTGQQFR (182 aa).

Belongs to the SUA5 family. TsaC subfamily.

The protein localises to the cytoplasm. It carries out the reaction L-threonine + hydrogencarbonate + ATP = L-threonylcarbamoyladenylate + diphosphate + H2O. Its function is as follows. Required for the formation of a threonylcarbamoyl group on adenosine at position 37 (t(6)A37) in tRNAs that read codons beginning with adenine. Catalyzes the conversion of L-threonine, HCO(3)(-)/CO(2) and ATP to give threonylcarbamoyl-AMP (TC-AMP) as the acyladenylate intermediate, with the release of diphosphate. This Marinobacter nauticus (strain ATCC 700491 / DSM 11845 / VT8) (Marinobacter aquaeolei) protein is Threonylcarbamoyl-AMP synthase.